A 479-amino-acid chain; its full sequence is U3 snoRNP-associated protein-like EMB2271 (479 aa).

The disordered stretch occupies residues 1–73 (MKLEKKKGIG…AHETVGEKRK (73 aa)). A compositionally biased stretch (basic residues) spans 8–17 (GIGAKRRGKK). Positions 18 to 38 (SSIDHDPFLEEETEKRRKFNY) are enriched in basic and acidic residues. Residues 39 to 51 (DDDDDIESVESEE) show a composition bias toward acidic residues. The segment covering 52 to 73 (EGKVGEEVEDEFAHETVGEKRK) has biased composition (basic and acidic residues). WD repeat units lie at residues 143-182 (KHQHSVTGVALSDDDSRGFSVSKDGTILHWDVSSGKSDEY), 204-243 (RHNKQSLALAVSSDGRYLATGGVDCHVHLWDIRTREHVQA), 246-285 (GHCGIVSSLCFREGTAELFSGSYDGTLSIWNAEHRTYIES), 288-326 (GHQSELLSIDALGRERVLSVGRDRTMQLYKVPESTRLIY), 328-366 (ASESNFECCCFVNSDEFLSGSDNGSIALWSILKKKPVFI), 386-425 (PACSWVSSVAVCRGSELAASGAGNGCVRLWGVESGSSAIQ), and 431-471 (PLPG…QNGV).

The protein belongs to the WD repeat RRP9 family.

The protein localises to the nucleus. The protein resides in the nucleolus. Functionally, component of a nucleolar small nuclear ribonucleoprotein particle (snoRNP) thought to participate in the processing and modification of pre-ribosomal RNA. Essential for embryogenesis. May function during late embryogenesis. This is U3 snoRNP-associated protein-like EMB2271 from Arabidopsis thaliana (Mouse-ear cress).